The following is an 857-amino-acid chain: DNA mismatch repair protein MutS (857 aa).

ATP is bound at residue 608-615 (GPNMSGKS).

This sequence belongs to the DNA mismatch repair MutS family.

In terms of biological role, this protein is involved in the repair of mismatches in DNA. It is possible that it carries out the mismatch recognition step. This protein has a weak ATPase activity. The chain is DNA mismatch repair protein MutS from Lactobacillus gasseri (strain ATCC 33323 / DSM 20243 / BCRC 14619 / CIP 102991 / JCM 1131 / KCTC 3163 / NCIMB 11718 / NCTC 13722 / AM63).